Reading from the N-terminus, the 790-residue chain is Sodium- and chloride-dependent glycine transporter 2 (790 aa).

The tract at residues 1 to 39 (MDYVNVVDGSKKTMNSPEGAAPGLIGATGITNPTPDNDL) is disordered. The Cytoplasmic segment spans residues 1–192 (MDYVNVVDGS…ARGNWSNKLD (192 aa)). The next 3 membrane-spanning stretches (helical) occupy residues 193 to 213 (FILS…FPYL), 220 to 240 (GAFL…IFYL), and 264 to 284 (GCGI…NIIM). Residues G199, A201, V202, and N206 each contribute to the Na(+) site. Residues 285-387 (CYTIFYLFAS…GIEYPGEIRW (103 aa)) lie on the Extracellular side of the membrane. A disulfide bridge links C304 with C313. Residues N336, N346, N351, and N357 are each glycosylated (N-linked (GlcNAc...) asparagine). 3 helical membrane passes run 388 to 408 (PLVF…AKGI), 427 to 447 (VILL…WWFI), and 463 to 483 (AATQ…TLSS). Na(+)-binding residues include S470 and N502. Helical transmembrane passes span 504–524 (ATSI…AHIL), 556–576 (WAII…FATI), 597–617 (LFTL…ITQG), 631–651 (SYSL…IYGL), 672–692 (ICWA…SFYQ), and 708–728 (MVMG…MFVI). Na(+) contacts are provided by L567 and D570. Over 729 to 790 (KMFLAPGTFI…PKDFELGTQC (62 aa)) the chain is Cytoplasmic.

This sequence belongs to the sodium:neurotransmitter symporter (SNF) (TC 2.A.22) family. SLC6A5 subfamily. As to expression, first expressed in late neurula stages in the anterior spinal cord, where expression intensifies through the tailbud stages, and by hatching, expression is seen in the hindbrain. During late hatching stages, expression extends along most of the length of the spinal cord, mildly intensifies in the hindbrain, and appears in localized regions of the lateral forebrain and medial midbrain. By the swimming tadpole stage, weak expression appears in the anterior hindbrain, with stronger expression in the posterior, postmitotic neurons.

The protein localises to the cell membrane. It catalyses the reaction glycine(out) + chloride(out) + 3 Na(+)(out) = glycine(in) + chloride(in) + 3 Na(+)(in). In terms of biological role, sodium- and chloride-dependent glycine transporter. Terminates the action of glycine by its high affinity sodium-dependent reuptake into presynaptic terminals. May be responsible for the termination of neurotransmission at strychnine-sensitive glycinergic synapses. This Xenopus laevis (African clawed frog) protein is Sodium- and chloride-dependent glycine transporter 2.